Here is a 517-residue protein sequence, read N- to C-terminus: Protein ERGIC-53 (517 aa).

A signal peptide spans 1-30 (MAVSRRRVPQAGARSFFCALLLSFSQFTGS). At 31–484 (DGTGGDAAAP…DLPPFPSCLS (454 aa)) the chain is on the lumenal side. One can recognise an L-type lectin-like domain in the interval 52–275 (RRFEYKYSFK…DVLSFLTFQL (224 aa)). S96 and D129 together coordinate a carbohydrate. Ca(2+) contacts are provided by D160, F162, and N164. Residues N164 and H186 each contribute to the a carbohydrate site. Residue D189 participates in Ca(2+) binding. A disulfide bond links C198 and C238. 259 to 261 (GGL) contributes to the a carbohydrate binding site. S433 bears the Phosphoserine mark. A helical transmembrane segment spans residues 485-505 (TIHFVIFVVVQTVLFVGYIMY). Over 506–517 (RTQQEAAAKKFF) the chain is Cytoplasmic. Residues 506-517 (RTQQEAAAKKFF) form a mediates interaction with RAB3GAP1, RAB3GAP2 and UBXN6 region. The ER export motif signature appears at 516-517 (FF).

As to quaternary structure, exists both as a covalent disulfide-linked homohexamer, and a complex of three disulfide-linked dimers non-covalently kept together. Interacts with MCFD2. May interact with TMEM115. Interacts with RAB3GAP1 and RAB3GAP2. Interacts with UBXN6. Interacts with SERPINA1/alpha1-antitrypsin. Interacts with BET1.

Its subcellular location is the endoplasmic reticulum-Golgi intermediate compartment membrane. It localises to the golgi apparatus membrane. The protein localises to the endoplasmic reticulum membrane. In terms of biological role, mannose-specific lectin. May recognize sugar residues of glycoproteins, glycolipids, or glycosylphosphatidyl inositol anchors and may be involved in the sorting or recycling of proteins, lipids, or both. The LMAN1-MCFD2 complex forms a specific cargo receptor for the ER-to-Golgi transport of selected proteins. This is Protein ERGIC-53 (Lman1) from Mus musculus (Mouse).